The primary structure comprises 337 residues: Cytoskeleton protein RodZ (337 aa).

Topologically, residues 1 to 111 are cytoplasmic; sequence MNTEATHDQN…LGKRRKKRDG (111 aa). An HTH cro/C1-type domain is found at 19–71; sequence LRNAREQLGLSQQAVAERLCLKVSTVRDIEEDKAPADLASTFLRGYIRSYARL. Positions 30–49 form a DNA-binding region, H-T-H motif; it reads QQAVAERLCLKVSTVRDIEE. Residues 112–132 traverse the membrane as a helical; Signal-anchor for type II membrane protein segment; it reads WLMTFTWLVLFVVIGLSGAWW. Topologically, residues 133-337 are periplasmic; the sequence is WQDHKAQQEE…TLNAEQSPAQ (205 aa). The span at 145 to 167 shows a compositional bias: polar residues; the sequence is TMADQSSAELSSNSEQGQSVPLN. The tract at residues 145–220 is disordered; that stretch reads TMADQSSAEL…VSPSQANVDT (76 aa). The segment covering 168–207 has biased composition (low complexity); sequence TSTTTDPATTSTPPASVDTTATNTQTPAVTAPAPAVDPQQ. A compositionally biased stretch (polar residues) spans 208–218; it reads NAVVSPSQANV.

This sequence belongs to the RodZ family.

It localises to the cell inner membrane. In terms of biological role, cytoskeletal protein that is involved in cell-shape control through regulation of the length of the long axis. This Escherichia coli O17:K52:H18 (strain UMN026 / ExPEC) protein is Cytoskeleton protein RodZ.